The chain runs to 443 residues: Chromosomal replication initiator protein DnaA (443 aa).

The domain I, interacts with DnaA modulators stretch occupies residues 1–80 (MFLEEKLNLV…ETCGDKIPVE (80 aa)). The interval 80–104 (EILIETKAASPLQSILEKSFDQKDF) is domain II. The segment at 105–321 (QFNPDYTFET…GALNDIYLYK (217 aa)) is domain III, AAA+ region. ATP-binding residues include G148, G150, K151, and T152. The domain IV, binds dsDNA stretch occupies residues 322-443 (KSYSLLFLNL…ERISSKYKLQ (122 aa)).

It belongs to the DnaA family. Oligomerizes as a right-handed, spiral filament on DNA at oriC.

It localises to the cytoplasm. Plays an essential role in the initiation and regulation of chromosomal replication. ATP-DnaA binds to the origin of replication (oriC) to initiate formation of the DNA replication initiation complex once per cell cycle. Binds the DnaA box (a 9 base pair repeat at the origin) and separates the double-stranded (ds)DNA. Forms a right-handed helical filament on oriC DNA; dsDNA binds to the exterior of the filament while single-stranded (ss)DNA is stabiized in the filament's interior. The ATP-DnaA-oriC complex binds and stabilizes one strand of the AT-rich DNA unwinding element (DUE), permitting loading of DNA polymerase. After initiation quickly degrades to an ADP-DnaA complex that is not apt for DNA replication. Binds acidic phospholipids. This is Chromosomal replication initiator protein DnaA from Leptospira interrogans serogroup Icterohaemorrhagiae serovar copenhageni (strain Fiocruz L1-130).